The following is a 126-amino-acid chain: Glycine cleavage system H protein (126 aa).

A Lipoyl-binding domain is found at T23 to K104. K64 bears the N6-lipoyllysine mark.

The protein belongs to the GcvH family. As to quaternary structure, the glycine cleavage system is composed of four proteins: P, T, L and H. (R)-lipoate serves as cofactor.

Functionally, the glycine cleavage system catalyzes the degradation of glycine. The H protein shuttles the methylamine group of glycine from the P protein to the T protein. The polypeptide is Glycine cleavage system H protein (Paraburkholderia xenovorans (strain LB400)).